Reading from the N-terminus, the 96-residue chain is DNA-binding protein HmvA (96 aa).

Residues 52-55 are interaction with DNA; sequence KTIK.

The protein belongs to the archaeal histone HMF family. Homodimer. Dimers then assemble into higher oligomers, with the DNA wrapped around the protein core.

It is found in the cytoplasm. The protein resides in the chromosome. Functionally, binds and compact DNA (95 to 150 base pairs) to form nucleosome-like structures that contain positive DNA supercoils. Increases the resistance of DNA to thermal denaturation (in vitro). In Methanocaldococcus jannaschii (strain ATCC 43067 / DSM 2661 / JAL-1 / JCM 10045 / NBRC 100440) (Methanococcus jannaschii), this protein is DNA-binding protein HmvA (hmvA).